A 390-amino-acid polypeptide reads, in one-letter code: 3-ketoacyl-CoA thiolase (390 aa).

The Acyl-thioester intermediate role is filled by C95. Residues H346 and C376 each act as proton acceptor in the active site.

This sequence belongs to the thiolase-like superfamily. Thiolase family. In terms of assembly, heterotetramer of two alpha chains (FadB) and two beta chains (FadA).

It is found in the cytoplasm. It carries out the reaction an acyl-CoA + acetyl-CoA = a 3-oxoacyl-CoA + CoA. It functions in the pathway lipid metabolism; fatty acid beta-oxidation. Its function is as follows. Catalyzes the final step of fatty acid oxidation in which acetyl-CoA is released and the CoA ester of a fatty acid two carbons shorter is formed. The chain is 3-ketoacyl-CoA thiolase from Psychrobacter arcticus (strain DSM 17307 / VKM B-2377 / 273-4).